The sequence spans 555 residues: Potassium-transporting ATPase potassium-binding subunit (555 aa).

10 consecutive transmembrane segments (helical) span residues 2–22 (IWVAVIITMLLFILVAKPTGV), 60–80 (QYALSLVLLNGFMIVVVYFIF), 130–150 (IGITFLMFAAPATTLALVMAF), 173–193 (VFLPIAFIAALVFVALGVPQT), 246–266 (MSNILQMMLMMLLPTALPFTY), 278–298 (ILFVSLFMVFLLGFITITTSE), 374–394 (AGFVNIIMYAIIAVFISGLMV), 412–432 (LIAVTILFHPLLILGFSALAL), 483–503 (LVMFLGRYFSLITMLAVAASL), and 525–545 (GIFIGTIVIVGALTFFPMLVL).

Belongs to the KdpA family. The system is composed of three essential subunits: KdpA, KdpB and KdpC.

It localises to the cell membrane. Part of the high-affinity ATP-driven potassium transport (or Kdp) system, which catalyzes the hydrolysis of ATP coupled with the electrogenic transport of potassium into the cytoplasm. This subunit binds the extracellular potassium ions and delivers the ions to the membrane domain of KdpB through an intramembrane tunnel. The sequence is that of Potassium-transporting ATPase potassium-binding subunit from Bacillus cereus (strain B4264).